Here is a 280-residue protein sequence, read N- to C-terminus: MLAILYDRIRPDERMLFERAEALGLPYKKVYVPALPMVLGERPKELEGVTVALERCVSQSRGLAAARYLTALGIPVVNRPEVIEACGDKWATSVALAKAGLPQPKTALATDREEALRLMEAFGYPVVLKPVIGSWGRLLAKVTDRAAAEALLEHKEVLGGFQHQLFYIQEYVEKPGRDIRVFVVGERAIAAIYRRSAHWITNTARGGQAENCPLTEEVARLSVKAAEAVGGGVVAVDLFESERGLLVNEVNHTMEFKNSVHTTGVDIPGEILKYAWSLAS.

ATP contacts are provided by residues K89, K129, G133–L139, Q169–R180, R194, and N202. The region spanning S93 to W276 is the ATP-grasp domain. D237, E249, and N251 together coordinate Mg(2+). Residues N258 to S259 carry the N-[TS] motif that is essential for LysX substrate specificity motif.

Belongs to the RimK family. LysX subfamily. In terms of assembly, homodimer. Mg(2+) is required as a cofactor.

The enzyme catalyses [amino-group carrier protein]-C-terminal-L-glutamate + L-2-aminoadipate + ATP = [amino-group carrier protein]-C-terminal-N-(1,4-dicarboxybutan-1-yl)-L-glutamine + ADP + phosphate + H(+). Its pathway is amino-acid biosynthesis; L-lysine biosynthesis via AAA pathway; L-lysine from L-alpha-aminoadipate (Thermus route): step 1/5. Its function is as follows. Catalyzes the ATP-dependent formation of a covalent bond between the amino group of alpha-aminoadipate (AAA) and the gamma-carboxyl group of the C-terminal glutamate residue in LysW. This chain is Alpha-aminoadipate--LysW ligase LysX (lysX), found in Thermus thermophilus (strain ATCC 27634 / DSM 579 / HB8).